The chain runs to 176 residues: MSRVGKSPIALQGAEVKLADGAITVKGPLGTITQAVNPLVNVANNDGTLNLSPVDDSREANALSGTMRAIIANAVHGVTKGFERKLTLVGVGYRAQAQGDKLNLSLGFSHPVVHQMPEGIKAETPTQTEIVIKGIDKQKVGQVAAEVRGYRPPEPYKGKGVRYADEVVILKETKKK.

Belongs to the universal ribosomal protein uL6 family. As to quaternary structure, part of the 50S ribosomal subunit.

This protein binds to the 23S rRNA, and is important in its secondary structure. It is located near the subunit interface in the base of the L7/L12 stalk, and near the tRNA binding site of the peptidyltransferase center. The protein is Large ribosomal subunit protein uL6 of Burkholderia mallei (strain NCTC 10247).